Reading from the N-terminus, the 369-residue chain is Anhydro-N-acetylmuramic acid kinase (369 aa).

12–19 contacts ATP; sequence GTSMDGVD.

It belongs to the anhydro-N-acetylmuramic acid kinase family.

It carries out the reaction 1,6-anhydro-N-acetyl-beta-muramate + ATP + H2O = N-acetyl-D-muramate 6-phosphate + ADP + H(+). It functions in the pathway amino-sugar metabolism; 1,6-anhydro-N-acetylmuramate degradation. It participates in cell wall biogenesis; peptidoglycan recycling. Functionally, catalyzes the specific phosphorylation of 1,6-anhydro-N-acetylmuramic acid (anhMurNAc) with the simultaneous cleavage of the 1,6-anhydro ring, generating MurNAc-6-P. Is required for the utilization of anhMurNAc either imported from the medium or derived from its own cell wall murein, and thus plays a role in cell wall recycling. The polypeptide is Anhydro-N-acetylmuramic acid kinase (Shewanella halifaxensis (strain HAW-EB4)).